The primary structure comprises 440 residues: Cell division protein FtsA (440 aa).

Belongs to the FtsA/MreB family. As to quaternary structure, self-interacts. Interacts with FtsZ.

The protein resides in the cell membrane. Cell division protein that is involved in the assembly of the Z ring. May serve as a membrane anchor for the Z ring. The polypeptide is Cell division protein FtsA (Enterococcus faecalis (strain ATCC 700802 / V583)).